The chain runs to 449 residues: Ribulose bisphosphate carboxylase large chain (449 aa).

K7 is modified (N6,N6,N6-trimethyllysine). N116 and T166 together coordinate substrate. K168 acts as the Proton acceptor in catalysis. K170 provides a ligand contact to substrate. Residues K194, D196, and E197 each contribute to the Mg(2+) site. K194 is subject to N6-carboxylysine. H287 functions as the Proton acceptor in the catalytic mechanism. The substrate site is built by R288, H320, and S372.

This sequence belongs to the RuBisCO large chain family. Type I subfamily. In terms of assembly, heterohexadecamer of 8 large chains and 8 small chains; disulfide-linked. The disulfide link is formed within the large subunit homodimers. Mg(2+) is required as a cofactor. In terms of processing, the disulfide bond which can form in the large chain dimeric partners within the hexadecamer appears to be associated with oxidative stress and protein turnover.

The protein resides in the plastid. The protein localises to the chloroplast. The enzyme catalyses 2 (2R)-3-phosphoglycerate + 2 H(+) = D-ribulose 1,5-bisphosphate + CO2 + H2O. The catalysed reaction is D-ribulose 1,5-bisphosphate + O2 = 2-phosphoglycolate + (2R)-3-phosphoglycerate + 2 H(+). Its function is as follows. RuBisCO catalyzes two reactions: the carboxylation of D-ribulose 1,5-bisphosphate, the primary event in carbon dioxide fixation, as well as the oxidative fragmentation of the pentose substrate in the photorespiration process. Both reactions occur simultaneously and in competition at the same active site. In Liriope muscari (Big blue lilyturf), this protein is Ribulose bisphosphate carboxylase large chain.